The following is a 410-amino-acid chain: DNA replication and repair protein RecF (410 aa).

Residue 30–37 participates in ATP binding; sequence GPNGHGKT.

The protein belongs to the RecF family.

The protein resides in the cytoplasm. In terms of biological role, the RecF protein is involved in DNA metabolism; it is required for DNA replication and normal SOS inducibility. RecF binds preferentially to single-stranded, linear DNA. It also seems to bind ATP. This Rhodococcus opacus (strain B4) protein is DNA replication and repair protein RecF.